The chain runs to 124 residues: Small ribosomal subunit protein uS12 (124 aa).

The residue at position 89 (D89) is a 3-methylthioaspartic acid.

Belongs to the universal ribosomal protein uS12 family. In terms of assembly, part of the 30S ribosomal subunit. Contacts proteins S8 and S17. May interact with IF1 in the 30S initiation complex.

Its function is as follows. With S4 and S5 plays an important role in translational accuracy. Interacts with and stabilizes bases of the 16S rRNA that are involved in tRNA selection in the A site and with the mRNA backbone. Located at the interface of the 30S and 50S subunits, it traverses the body of the 30S subunit contacting proteins on the other side and probably holding the rRNA structure together. The combined cluster of proteins S8, S12 and S17 appears to hold together the shoulder and platform of the 30S subunit. This is Small ribosomal subunit protein uS12 from Nitratiruptor sp. (strain SB155-2).